We begin with the raw amino-acid sequence, 855 residues long: DNA mismatch repair protein MutS (855 aa).

An ATP-binding site is contributed by 613–620 (GPNMGGKS). Residues 795–816 (ETTSLPHEVPSQQSGKPASPMQ) form a disordered region. Positions 796 to 816 (TTSLPHEVPSQQSGKPASPMQ) are enriched in polar residues.

The protein belongs to the DNA mismatch repair MutS family.

This protein is involved in the repair of mismatches in DNA. It is possible that it carries out the mismatch recognition step. This protein has a weak ATPase activity. This chain is DNA mismatch repair protein MutS, found in Pseudomonas paraeruginosa (strain DSM 24068 / PA7) (Pseudomonas aeruginosa (strain PA7)).